A 359-amino-acid polypeptide reads, in one-letter code: 3-dehydroquinate synthase (359 aa).

NAD(+) contacts are provided by residues 71–76 (DGEQYK), 105–109 (GVIGD), 129–130 (TT), Lys142, Lys151, and 169–172 (CLST). Zn(2+) contacts are provided by Glu184, His247, and His264.

This sequence belongs to the sugar phosphate cyclases superfamily. Dehydroquinate synthase family. Co(2+) is required as a cofactor. Zn(2+) serves as cofactor. It depends on NAD(+) as a cofactor.

It localises to the cytoplasm. It catalyses the reaction 7-phospho-2-dehydro-3-deoxy-D-arabino-heptonate = 3-dehydroquinate + phosphate. The protein operates within metabolic intermediate biosynthesis; chorismate biosynthesis; chorismate from D-erythrose 4-phosphate and phosphoenolpyruvate: step 2/7. In terms of biological role, catalyzes the conversion of 3-deoxy-D-arabino-heptulosonate 7-phosphate (DAHP) to dehydroquinate (DHQ). This chain is 3-dehydroquinate synthase, found in Shewanella pealeana (strain ATCC 700345 / ANG-SQ1).